The chain runs to 1292 residues: Kinesin-like protein KIN-12A (1292 aa).

The disordered stretch occupies residues 1–86; the sequence is MKKHFTLPRN…LSAETATESG (86 aa). Low complexity predominate over residues 19 to 29; it reads PHSPNPSISKS. The segment covering 62–71 has biased composition (pro residues); that stretch reads PLPPRPPPSN. Positions 91 to 426 constitute a Kinesin motor domain; sequence GVKVIVRMKP…LRFAQRAKAI (336 aa). 165–172 contributes to the ATP binding site; the sequence is GQTGSGKT. Microtubules-binding regions lie at residues 293-297, 326-332, and 375-379; these read SSRSH, VDLAGSE, and HIPYR. Residues 424 to 461 form a neck region; the sequence is KAIQNKAVVNEVMQDDVNFLRGVIHQLRDELQRMKNDG. Positions 677–724 are disordered; that stretch reads SVSPTIRNSRKSLKTSELSTASQKDSEGENLVTEAADPSPATSKKMNN. 2 coiled-coil regions span residues 945 to 992 and 1047 to 1232; these read EVLK…CYID and SEEL…NQLV.

Belongs to the TRAFAC class myosin-kinesin ATPase superfamily. Kinesin family. KIN-12 subfamily. Homodimer and heterodimer with KIN12B. Interacts with TIO.

The protein resides in the cytoplasm. The protein localises to the cytoskeleton. It is found in the phragmoplast. Its function is as follows. Plus-end directed kinesin-like motor enzyme that plays a critical role in the organization of phragmoplast microtubules during cytokinesis. Constitutes a signaling module in association with serine/threonine-protein kinase TIO that is required to support phragmoplast expansion and cell-plate growth in plant cells. Binds microtubules in an ATP-sensitive manner. The sequence is that of Kinesin-like protein KIN-12A from Arabidopsis thaliana (Mouse-ear cress).